The primary structure comprises 834 residues: Ras GTPase-activating protein 3 (834 aa).

C2 domains follow at residues 1–112 and 123–263; these read MAVE…DTWF and VQGK…EAWY. A2 carries the post-translational modification N-acetylalanine. Y66 carries the post-translational modification Phosphotyrosine. A Phosphoserine modification is found at S77. Phosphothreonine is present on T110. The Ras-GAP domain maps to 346–561; that stretch reads GRVVPFISAI…DAVKNFLDLI (216 aa). The 102-residue stretch at 576-677 folds into the PH domain; the sequence is ILLKEGFMIK…WIDILTKVSQ (102 aa). Residues 679–715 form a Btk-type zinc finger; the sequence is NQKRLAVYHPSAYLNGHWLCCRASSDTAAGCSPCTGG. The Zn(2+) site is built by H687, C698, C699, and C709. The segment at 806 to 834 is disordered; the sequence is KYGSQEHPIGDKSFQSYIRQQSETPAHSM. S809 and S833 each carry phosphoserine. The segment covering 818–834 has biased composition (polar residues); sequence SFQSYIRQQSETPAHSM.

Functionally, inhibitory regulator of the Ras-cyclic AMP pathway. May bind inositol tetrakisphosphate (IP4). This is Ras GTPase-activating protein 3 (RASA3) from Bos taurus (Bovine).